The sequence spans 511 residues: Maturase K (511 aa).

Belongs to the intron maturase 2 family. MatK subfamily.

Its subcellular location is the plastid. The protein resides in the chloroplast. Functionally, usually encoded in the trnK tRNA gene intron. Probably assists in splicing its own and other chloroplast group II introns. In Hordeum murinum subsp. leporinum (Mouse barley), this protein is Maturase K.